We begin with the raw amino-acid sequence, 95 residues long: MKITKVAVAGTLESSDVQVRVQPFDSLDIEINSSVAKQFGEQIEATVREVLAKLGITAAQVIVEDKGALDCVLQARVKAAAMRATDETINWEAVL.

Ser14 carries the O-(phosphoribosyl dephospho-coenzyme A)serine modification.

This sequence belongs to the CitD family. In terms of assembly, oligomer with a subunit composition of (alpha,beta,gamma)6.

The protein localises to the cytoplasm. Its function is as follows. Covalent carrier of the coenzyme of citrate lyase. The sequence is that of Citrate lyase acyl carrier protein from Haemophilus influenzae (strain 86-028NP).